A 590-amino-acid polypeptide reads, in one-letter code: ATP-dependent zinc metalloprotease FtsH 1 (590 aa).

At methionine 1–glutamine 8 the chain is on the cytoplasmic side. The helical transmembrane segment at leucine 9–threonine 29 threads the bilayer. Residues glutamine 30–serine 103 lie on the Extracellular side of the membrane. Residues valine 104–leucine 124 traverse the membrane as a helical segment. Over serine 125–methionine 590 the chain is Cytoplasmic. Glycine 195–threonine 202 contributes to the ATP binding site. Histidine 418 contributes to the Zn(2+) binding site. Glutamate 419 is a catalytic residue. Zn(2+) is bound by residues histidine 422 and aspartate 496.

It in the central section; belongs to the AAA ATPase family. In the C-terminal section; belongs to the peptidase M41 family. As to quaternary structure, homohexamer. The cofactor is Zn(2+).

The protein resides in the cell membrane. Functionally, acts as a processive, ATP-dependent zinc metallopeptidase for both cytoplasmic and membrane proteins. Plays a role in the quality control of integral membrane proteins. This chain is ATP-dependent zinc metalloprotease FtsH 1, found in Alkaliphilus metalliredigens (strain QYMF).